The sequence spans 228 residues: PKHD-type hydroxylase XC_1340 (228 aa).

Residues 78 to 180 (RIYPPLFNRY…RVASFFWIQS (103 aa)) enclose the Fe2OG dioxygenase domain. Residues H96, D98, and H161 each coordinate Fe cation. 2-oxoglutarate is bound at residue R171.

It depends on Fe(2+) as a cofactor. Requires L-ascorbate as cofactor.

In Xanthomonas campestris pv. campestris (strain 8004), this protein is PKHD-type hydroxylase XC_1340.